The following is a 290-amino-acid chain: Light-independent protochlorophyllide reductase iron-sulfur ATP-binding protein (290 aa).

ATP contacts are provided by residues 10-15 (GIGKST) and Lys39. Ser14 lines the Mg(2+) pocket. [4Fe-4S] cluster-binding residues include Cys95 and Cys129. 180–181 (NR) contributes to the ATP binding site.

Belongs to the NifH/BchL/ChlL family. Homodimer. Protochlorophyllide reductase is composed of three subunits; ChlL, ChlN and ChlB. [4Fe-4S] cluster is required as a cofactor.

The protein resides in the plastid. It is found in the chloroplast. It carries out the reaction chlorophyllide a + oxidized 2[4Fe-4S]-[ferredoxin] + 2 ADP + 2 phosphate = protochlorophyllide a + reduced 2[4Fe-4S]-[ferredoxin] + 2 ATP + 2 H2O. It functions in the pathway porphyrin-containing compound metabolism; chlorophyll biosynthesis (light-independent). Functionally, component of the dark-operative protochlorophyllide reductase (DPOR) that uses Mg-ATP and reduced ferredoxin to reduce ring D of protochlorophyllide (Pchlide) to form chlorophyllide a (Chlide). This reaction is light-independent. The L component serves as a unique electron donor to the NB-component of the complex, and binds Mg-ATP. The protein is Light-independent protochlorophyllide reductase iron-sulfur ATP-binding protein of Chaetosphaeridium globosum (Charophycean green alga).